The chain runs to 210 residues: Large ribosomal subunit protein uL4 (210 aa).

The disordered stretch occupies residues 46 to 89; the sequence is QGTASTLTRSEVRGGGRKPYKQKGTGRARQGSIRTPLRPGGGII. Basic residues predominate over residues 60-71; it reads GGRKPYKQKGTG.

It belongs to the universal ribosomal protein uL4 family. As to quaternary structure, part of the 50S ribosomal subunit.

In terms of biological role, one of the primary rRNA binding proteins, this protein initially binds near the 5'-end of the 23S rRNA. It is important during the early stages of 50S assembly. It makes multiple contacts with different domains of the 23S rRNA in the assembled 50S subunit and ribosome. Forms part of the polypeptide exit tunnel. The chain is Large ribosomal subunit protein uL4 from Prochlorococcus marinus (strain MIT 9312).